The primary structure comprises 148 residues: uncharacterized protein (148 aa).

An HTH asnC-type domain is found at 2-63 (LDELDKRILY…LINPFKAGYE (62 aa)). Residues 21 to 40 (YSEIARILGVPESTVRVRVK) constitute a DNA-binding region (H-T-H motif).

This is an uncharacterized protein from Pyrococcus furiosus (strain ATCC 43587 / DSM 3638 / JCM 8422 / Vc1).